The sequence spans 260 residues: 2-oxo-tetronate isomerase (260 aa).

The Proton donor/acceptor role is filled by Glu143. The Mg(2+) site is built by Glu143, Asp178, Gln204, and Glu240. The Proton donor/acceptor role is filled by Glu240.

The protein belongs to the hyi family. OtnI subfamily.

It catalyses the reaction 2-dehydro-L-erythronate = 3-dehydro-L-erythronate. The catalysed reaction is 2-dehydro-D-erythronate = 3-dehydro-D-erythronate. In terms of biological role, catalyzes the isomerization of 2-oxo-tetronate to 3-oxo-tetronate. The sequence is that of 2-oxo-tetronate isomerase from Cupriavidus necator (strain ATCC 17699 / DSM 428 / KCTC 22496 / NCIMB 10442 / H16 / Stanier 337) (Ralstonia eutropha).